A 197-amino-acid polypeptide reads, in one-letter code: Phosphoheptose isomerase (197 aa).

Positions 36–197 constitute an SIS domain; the sequence is MVNALLNEGK…IDSQLFGSEE (162 aa). 51 to 53 provides a ligand contact to substrate; sequence NGG. Zn(2+)-binding residues include H60 and E64. Substrate contacts are provided by residues E64, 93–94, 119–121, S124, and Q174; these read ND and STS. Zn(2+)-binding residues include Q174 and H182.

It belongs to the SIS family. GmhA subfamily. As to quaternary structure, homotetramer. The cofactor is Zn(2+).

The protein localises to the cytoplasm. It carries out the reaction 2 D-sedoheptulose 7-phosphate = D-glycero-alpha-D-manno-heptose 7-phosphate + D-glycero-beta-D-manno-heptose 7-phosphate. Its pathway is carbohydrate biosynthesis; D-glycero-D-manno-heptose 7-phosphate biosynthesis; D-glycero-alpha-D-manno-heptose 7-phosphate and D-glycero-beta-D-manno-heptose 7-phosphate from sedoheptulose 7-phosphate: step 1/1. In terms of biological role, catalyzes the isomerization of sedoheptulose 7-phosphate in D-glycero-D-manno-heptose 7-phosphate. The polypeptide is Phosphoheptose isomerase (Pseudomonas putida (strain W619)).